We begin with the raw amino-acid sequence, 388 residues long: Galactokinase (388 aa).

Position 33-36 (33-36 (EHTD)) interacts with substrate. Residues S67 and 124–130 (GAGLSSS) contribute to the ATP site. Mg(2+) contacts are provided by S130 and E162. Catalysis depends on D174, which acts as the Proton acceptor. Y224 is a binding site for substrate.

The protein belongs to the GHMP kinase family. GalK subfamily.

It is found in the cytoplasm. The enzyme catalyses alpha-D-galactose + ATP = alpha-D-galactose 1-phosphate + ADP + H(+). It participates in carbohydrate metabolism; galactose metabolism. Catalyzes the transfer of the gamma-phosphate of ATP to D-galactose to form alpha-D-galactose-1-phosphate (Gal-1-P). This Lacticaseibacillus casei (strain BL23) (Lactobacillus casei) protein is Galactokinase.